We begin with the raw amino-acid sequence, 119 residues long: Large ribosomal subunit protein bL17 (119 aa).

This sequence belongs to the bacterial ribosomal protein bL17 family. As to quaternary structure, part of the 50S ribosomal subunit. Contacts protein L32.

The protein is Large ribosomal subunit protein bL17 of Psychrobacter arcticus (strain DSM 17307 / VKM B-2377 / 273-4).